We begin with the raw amino-acid sequence, 635 residues long: Peptidyl-prolyl cis-trans isomerase PASTICCINO1 (635 aa).

Over residues M1 to N10 the composition is skewed to polar residues. Residues M1–K28 form a disordered region. PPIase FKBP-type domains lie at G51–S147, P175–I260, and D291–E383. TPR repeat units follow at residues A400–V433, N449–H482, and V483–S516. Positions K530–F546 are calmodulin-binding. The segment covering E569–G586 has biased composition (acidic residues). Residues E569–E593 form a disordered region. A helical; Anchor for type IV membrane protein transmembrane segment spans residues V609 to F629.

Belongs to the FKBP-type PPIase family. Interacts with calmodulin (CaM). Interacts with RPM1 and NAC089. Interacts with the elongase complex core members KCR1, PAS2 and CER10. In terms of tissue distribution, expressed ubiquitously.

It is found in the endoplasmic reticulum membrane. The protein localises to the cytoplasm. It localises to the nucleus. It carries out the reaction [protein]-peptidylproline (omega=180) = [protein]-peptidylproline (omega=0). Functionally, PPIases accelerate the folding of proteins. It catalyzes the cis-trans isomerization of proline imidic peptide bonds in oligopeptides. Essential protein regulating cell division, adhesion and elongation throughout the plant development and embryogenesis. Required for the spatial organization of apical meristems. Involved in the hormonal control of cell division and differentiation mediated by cytokinins and auxin. Regulates the function of NAC089 transcription factor by controlling its targeting to the nucleus upon plant cell division. Interacts with enzymes of the fatty acid elongase complex and favors the generation of very-long-chain fatty acids (VLCFAs) required for polar auxin transport and tissue patterning during plant development. The polypeptide is Peptidyl-prolyl cis-trans isomerase PASTICCINO1 (PAS1) (Arabidopsis thaliana (Mouse-ear cress)).